The chain runs to 52 residues: Large ribosomal subunit protein eL39 (52 aa).

Belongs to the eukaryotic ribosomal protein eL39 family. Interacts with YIH1.

In Encephalitozoon cuniculi (strain GB-M1) (Microsporidian parasite), this protein is Large ribosomal subunit protein eL39 (RPL39).